Here is a 1088-residue protein sequence, read N- to C-terminus: RNA-directed RNA polymerase (1088 aa).

In terms of domain architecture, RdRp catalytic spans 501–687; that stretch reads LSYGDVTRFL…AKRYIAGGKI (187 aa).

The protein belongs to the reoviridae RNA-directed RNA polymerase family. As to quaternary structure, interacts with VP3 (Potential). Interacts with VP2; this interaction activates VP1. Interacts with NSP5; this interaction is probably necessary for the formation of functional virus factories. Interacts with NSP2; this interaction is weak. Mg(2+) is required as a cofactor.

Its subcellular location is the virion. The enzyme catalyses RNA(n) + a ribonucleoside 5'-triphosphate = RNA(n+1) + diphosphate. In terms of biological role, RNA-directed RNA polymerase that is involved in both transcription and genome replication. Together with VP3 capping enzyme, forms an enzyme complex positioned near the channels situated at each of the five-fold vertices of the core. Following infection, the outermost layer of the virus is lost, leaving a double-layered particle (DLP) made up of the core and VP6 shell. VP1 then catalyzes the transcription of fully conservative plus-strand genomic RNAs that are extruded through the DLP's channels into the cytoplasm where they function as mRNAs for translation of viral proteins. One copy of each of the viral (+)RNAs is also recruited during core assembly, together with newly synthesized polymerase complexes and VP2. The polymerase of these novo-formed particles catalyzes the synthesis of complementary minus-strands leading to dsRNA formation. To do so, the polymerase specifically recognizes and binds 4 bases 5'-UGUG-3' in the conserved 3'-sequence of plus-strand RNA templates. VP2 presumably activates the autoinhibited VP1-RNA complex to coordinate packaging and genome replication. Once dsRNA synthesis is complete, the polymerase switches to the transcriptional mode, thus providing secondary transcription. This is RNA-directed RNA polymerase from Homo sapiens (Human).